The primary structure comprises 487 residues: Ribulose bisphosphate carboxylase large chain (487 aa).

Residues asparagine 127 and threonine 177 each coordinate substrate. The active-site Proton acceptor is lysine 179. Residue lysine 181 coordinates substrate. Mg(2+) contacts are provided by lysine 205, aspartate 207, and glutamate 208. An N6-carboxylysine modification is found at lysine 205. The Proton acceptor role is filled by histidine 297. Residues arginine 298, histidine 330, and serine 382 each coordinate substrate.

Belongs to the RuBisCO large chain family. Type I subfamily. Heterohexadecamer of 8 large chains and 8 small chains. The cofactor is Mg(2+).

The catalysed reaction is 2 (2R)-3-phosphoglycerate + 2 H(+) = D-ribulose 1,5-bisphosphate + CO2 + H2O. The enzyme catalyses D-ribulose 1,5-bisphosphate + O2 = 2-phosphoglycolate + (2R)-3-phosphoglycerate + 2 H(+). In terms of biological role, ruBisCO catalyzes two reactions: the carboxylation of D-ribulose 1,5-bisphosphate, the primary event in carbon dioxide fixation, as well as the oxidative fragmentation of the pentose substrate. Both reactions occur simultaneously and in competition at the same active site. This Paracoccus denitrificans (strain Pd 1222) protein is Ribulose bisphosphate carboxylase large chain.